The following is a 449-amino-acid chain: Delta(8)-fatty-acid desaturase 1 (449 aa).

The region spanning 7–91 (KKYITNEDLK…IRDFQVSEVS (85 aa)) is the Cytochrome b5 heme-binding domain. 2 residues coordinate heme: histidine 42 and histidine 65. A run of 2 helical transmembrane segments spans residues 113–133 (VTLY…YGVL) and 138–158 (VFAH…SAYI). The Histidine box-1 signature appears at 160 to 164 (HDSGH). A helical membrane pass occupies residues 173–195 (YNRFAQLLSGNCLTGISIAWWKW). Residues 197–201 (HNAHH) carry the Histidine box-2 motif. Transmembrane regions (helical) follow at residues 255–275 (YYPV…LLLF), 284–304 (ALNF…VSCL), and 311–331 (FFFV…FTLN). A Histidine box-3 motif is present at residues 374–378 (QLEHH).

It belongs to the fatty acid desaturase type 1 family. The cofactor is Fe cation. As to expression, highly expressed in flowers. Expressed in roots, leaves, stems and siliques.

The protein resides in the endoplasmic reticulum membrane. It catalyses the reaction an N-acyl-(4R)-4-hydroxysphinganine + 2 Fe(II)-[cytochrome b5] + O2 + 2 H(+) = a (4R,8E)-4-hydroxysphingenine ceramide + 2 Fe(III)-[cytochrome b5] + 2 H2O. The catalysed reaction is an N-acyl-(4R)-4-hydroxysphinganine + 2 Fe(II)-[cytochrome b5] + O2 + 2 H(+) = a (4R,8Z)-4-hydroxysphing-8-enine ceramide + 2 Fe(III)-[cytochrome b5] + 2 H2O. In terms of biological role, plays a major role as delta(8)-fatty-acid desaturase which introduces a double bond at the 8-position in the long-chain base (LCB) of ceramides with or without a hydroxy group at the 4-position. The enzyme produces both the 8E and 8Z isomers (in a 4:1 ratio). This structural modification contributes to the quantitative partitioning of ceramides between the two major sphingolipid classes, glucosylceramides and glycosylinositolphosphoryl ceramides. Sphingolipids are important membrane components involved in environmental stress responses, such as resistance to chilling, and act as cell signaling molecules. This is Delta(8)-fatty-acid desaturase 1 (SLD1) from Arabidopsis thaliana (Mouse-ear cress).